Here is a 217-residue protein sequence, read N- to C-terminus: Small ribosomal subunit protein uS3 (217 aa).

The region spanning 38–106 (IRKFIDNELK…KVHINVIEIK (69 aa)) is the KH type-2 domain.

The protein belongs to the universal ribosomal protein uS3 family. Part of the 30S ribosomal subunit. Forms a tight complex with proteins S10 and S14.

Its function is as follows. Binds the lower part of the 30S subunit head. Binds mRNA in the 70S ribosome, positioning it for translation. This chain is Small ribosomal subunit protein uS3, found in Staphylococcus aureus (strain MSSA476).